A 336-amino-acid polypeptide reads, in one-letter code: uncharacterized protein (336 aa).

Residues 297-316 are compositionally biased toward basic and acidic residues; that stretch reads KKDLQKSEEEEHPNDDHVYM. The disordered stretch occupies residues 297–336; it reads KKDLQKSEEEEHPNDDHVYMTEEDDMEKIERGIESLGNGH.

This is an uncharacterized protein from Invertebrate iridescent virus 6 (IIV-6).